The sequence spans 202 residues: MRMAESNKLKTGIFSGSFNPVHIGHLALANYLCEYEELDEVWFMVSPQNPLKAGTELWPDDLRLRLVELATEEYPRFRSSDFEFHLPRPSYSVHTLEKLHETYPERDFYLIIGSDNWARFDRWYQSERIIKENRILIYPRPGFPVNENGLPETVRLVHSPTFEISSTFIRQALDEKKDVRYFLHPKVWEYIREYIRQSITDN.

It belongs to the NadD family.

The enzyme catalyses nicotinate beta-D-ribonucleotide + ATP + H(+) = deamido-NAD(+) + diphosphate. It participates in cofactor biosynthesis; NAD(+) biosynthesis; deamido-NAD(+) from nicotinate D-ribonucleotide: step 1/1. Its function is as follows. Catalyzes the reversible adenylation of nicotinate mononucleotide (NaMN) to nicotinic acid adenine dinucleotide (NaAD). The polypeptide is Probable nicotinate-nucleotide adenylyltransferase (Bacteroides thetaiotaomicron (strain ATCC 29148 / DSM 2079 / JCM 5827 / CCUG 10774 / NCTC 10582 / VPI-5482 / E50)).